We begin with the raw amino-acid sequence, 148 residues long: Lipoprotein signal peptidase (148 aa).

2 helical membrane-spanning segments follow: residues 57-77 and 88-105; these read VLLV…FIKY and VSFI…RIFY. Catalysis depends on residues Asp110 and Asp129. A helical transmembrane segment spans residues 124-144; sequence TFNIADILVVVGTIMLAIFLL.

This sequence belongs to the peptidase A8 family.

It is found in the cell membrane. The catalysed reaction is Release of signal peptides from bacterial membrane prolipoproteins. Hydrolyzes -Xaa-Yaa-Zaa-|-(S,diacylglyceryl)Cys-, in which Xaa is hydrophobic (preferably Leu), and Yaa (Ala or Ser) and Zaa (Gly or Ala) have small, neutral side chains.. The protein operates within protein modification; lipoprotein biosynthesis (signal peptide cleavage). Its function is as follows. This protein specifically catalyzes the removal of signal peptides from prolipoproteins. This is Lipoprotein signal peptidase from Clostridium novyi (strain NT).